Reading from the N-terminus, the 498-residue chain is Probable cytosol aminopeptidase (498 aa).

Residues lysine 267 and aspartate 272 each contribute to the Mn(2+) site. Residue lysine 279 is part of the active site. Mn(2+) is bound by residues aspartate 290, aspartate 349, and glutamate 351. The active site involves arginine 353.

The protein belongs to the peptidase M17 family. It depends on Mn(2+) as a cofactor.

The protein localises to the cytoplasm. It carries out the reaction Release of an N-terminal amino acid, Xaa-|-Yaa-, in which Xaa is preferably Leu, but may be other amino acids including Pro although not Arg or Lys, and Yaa may be Pro. Amino acid amides and methyl esters are also readily hydrolyzed, but rates on arylamides are exceedingly low.. It catalyses the reaction Release of an N-terminal amino acid, preferentially leucine, but not glutamic or aspartic acids.. Presumably involved in the processing and regular turnover of intracellular proteins. Catalyzes the removal of unsubstituted N-terminal amino acids from various peptides. The chain is Probable cytosol aminopeptidase from Dechloromonas aromatica (strain RCB).